A 355-amino-acid polypeptide reads, in one-letter code: Biotin synthase (355 aa).

One can recognise a Radical SAM core domain in the interval 51–275 (NTVKVNYLVN…VCPDKEIRIA (225 aa)). Positions 66, 70, and 73 each coordinate [4Fe-4S] cluster. [2Fe-2S] cluster-binding residues include Cys-110, Cys-143, Cys-203, and Arg-273.

It belongs to the radical SAM superfamily. Biotin synthase family. In terms of assembly, homodimer. The cofactor is [4Fe-4S] cluster. It depends on [2Fe-2S] cluster as a cofactor.

It carries out the reaction (4R,5S)-dethiobiotin + (sulfur carrier)-SH + 2 reduced [2Fe-2S]-[ferredoxin] + 2 S-adenosyl-L-methionine = (sulfur carrier)-H + biotin + 2 5'-deoxyadenosine + 2 L-methionine + 2 oxidized [2Fe-2S]-[ferredoxin]. Its pathway is cofactor biosynthesis; biotin biosynthesis; biotin from 7,8-diaminononanoate: step 2/2. Its function is as follows. Catalyzes the conversion of dethiobiotin (DTB) to biotin by the insertion of a sulfur atom into dethiobiotin via a radical-based mechanism. The chain is Biotin synthase from Saccharopolyspora erythraea (strain ATCC 11635 / DSM 40517 / JCM 4748 / NBRC 13426 / NCIMB 8594 / NRRL 2338).